Consider the following 455-residue polypeptide: Exodeoxyribonuclease 7 large subunit (455 aa).

This sequence belongs to the XseA family. Heterooligomer composed of large and small subunits.

It is found in the cytoplasm. It catalyses the reaction Exonucleolytic cleavage in either 5'- to 3'- or 3'- to 5'-direction to yield nucleoside 5'-phosphates.. Functionally, bidirectionally degrades single-stranded DNA into large acid-insoluble oligonucleotides, which are then degraded further into small acid-soluble oligonucleotides. This chain is Exodeoxyribonuclease 7 large subunit, found in Escherichia coli O7:K1 (strain IAI39 / ExPEC).